A 145-amino-acid polypeptide reads, in one-letter code: MFLRNSVLRTAPVLRRGITTLTPVSTKLAPPAAASYSQAMKANNFVYVSGQIPYTPDNKPVQGSISEKAEQVFQNVKNILAESNSSLDNIVKVNVFLADMKNFAEFNSVYAKHFHTHKPARSCVGVASLPLNVDLEMEVIAVEKN.

A mitochondrion-targeting transit peptide spans 1–17; sequence MFLRNSVLRTAPVLRRG.

It belongs to the RutC family.

It is found in the mitochondrion matrix. Functionally, plays a role in the maintenance of mitochondrial DNA. The sequence is that of Protein MMF1, mitochondrial (MMF1) from Saccharomyces cerevisiae (strain ATCC 204508 / S288c) (Baker's yeast).